Reading from the N-terminus, the 186-residue chain is Threonylcarbamoyl-AMP synthase (186 aa).

Residues 5-186 (TQSINDAVKC…DAITGEILRL (182 aa)) enclose the YrdC-like domain.

The protein belongs to the SUA5 family. TsaC subfamily.

The protein localises to the cytoplasm. It catalyses the reaction L-threonine + hydrogencarbonate + ATP = L-threonylcarbamoyladenylate + diphosphate + H2O. Required for the formation of a threonylcarbamoyl group on adenosine at position 37 (t(6)A37) in tRNAs that read codons beginning with adenine. Catalyzes the conversion of L-threonine, HCO(3)(-)/CO(2) and ATP to give threonylcarbamoyl-AMP (TC-AMP) as the acyladenylate intermediate, with the release of diphosphate. This chain is Threonylcarbamoyl-AMP synthase, found in Coxiella burnetii (strain RSA 493 / Nine Mile phase I).